The primary structure comprises 772 residues: Hyperosmolality-gated Ca2+ permeable channel 1.1 (772 aa).

At 1 to 5 (MATLK) the chain is on the extracellular side. A helical transmembrane segment spans residues 6–28 (DIGVSAGINILTAFIFFIIFAFL). At 29-100 (RLQPFNDRVY…AGLDSVVYLR (72 aa)) the chain is on the cytoplasmic side. The chain crosses the membrane as a helical span at residues 101-122 (IYWLGLKIFAPIAMLAWAVLVP). At 123-159 (VNWTNNELELAKHFKNVTSSDIDKLTISNIPEGSNRF) the chain is on the extracellular side. Asn138 is a glycosylation site (N-linked (GlcNAc) asparagine). A helical membrane pass occupies residues 160–180 (WAHIIMAYAFTIWTCYMLMKE). The Cytoplasmic segment spans residues 181–372 (YETVANMRLQ…PNLAIPYVSL (192 aa)). The segment at 339–344 (QTTQTR) is cytoplasmic region required for homodimerization. Residues 373-398 (TVRRLVMNVAFFFLTFFFIIPIAFVQ) form a helical membrane-spanning segment. Over 399 to 424 (SLATIEGIEKVAPFLKVIIEKDFIKS) the chain is Extracellular. Residues 425–450 (LIQGLLAGIALKLFLIFLPAILMTMS) traverse the membrane as a helical segment. Residues 451-461 (KFEGFTSVSFL) lie on the Cytoplasmic side of the membrane. Residues 462-485 (ERRSASRYYIFNLVNVFLGSVIAG) form a helical membrane-spanning segment. At 486 to 509 (AAFEQLNSFLNQSPNQIPKTIGMA) the chain is on the extracellular side. A helical membrane pass occupies residues 510–538 (IPMKATFFITYIMVDGWAGVAGEILMLKP). The Cytoplasmic portion of the chain corresponds to 539–566 (LIIYHLKNAFLVKTEKDREEAMNPGSIG). Residues 567-587 (FNTGEPQIQLYFLLGLVYAPV) form a helical membrane-spanning segment. A topological domain (extracellular) is located at residue Thr588. A helical transmembrane segment spans residues 589 to 606 (PMLLPFILVFFALAYVVY). The Cytoplasmic portion of the chain corresponds to 607 to 624 (RHQIINVYNQEYESAAAF). A helical membrane pass occupies residues 625–647 (WPDVHGRVITALIISQLLLMGLL). Topologically, residues 648–653 (GTKHAA) are extracellular. The chain crosses the membrane as a helical span at residues 654–674 (SAAPFLIALPVITIGFHRFCK). Topologically, residues 675–772 (GRFEPAFVRY…SLAVINGKEV (98 aa)) are cytoplasmic. Positions 686–688 (LQE) are cytoplasmic region required for homodimerization. Residues 743–772 (KRQSRRNTPAPSRISGESSPSLAVINGKEV) form a disordered region. Residues 748–763 (RNTPAPSRISGESSPS) show a composition bias toward polar residues.

Belongs to the CSC1 (TC 1.A.17) family. As to quaternary structure, homodimer. Expressed in leaves, flowers, roots and guard cells.

Its subcellular location is the cell membrane. With respect to regulation, activated by mechanical pressure. Acts as a hyperosmolarity-gated non-selective cation channel that permeates Ca(2+) ions. Shows the following permeability sequence: K(+) &gt; Ba(2+) = Ca(2+) &gt; Na(+) = Mg(2+) = Cs(+). Mechanosensitive ion channel that converts mechanical stimuli into a flow of ions: activated in response to membrane stretch and poke. This is Hyperosmolality-gated Ca2+ permeable channel 1.1 from Arabidopsis thaliana (Mouse-ear cress).